The chain runs to 2157 residues: Polyketide synthase 2 (2157 aa).

The segment at 7-244 is N-terminal acylcarrier protein transacylase domain (SAT); the sequence is FIFGDQTGGF…IPIPIWAPYH (238 aa). Positions 374-807 constitute a Ketosynthase family 3 (KS3) domain; it reads DSKIAIIGMS…GGNSALLLED (434 aa). Residues Cys-546, His-681, and His-723 each act as for beta-ketoacyl synthase activity in the active site. The interval 908–1213 is malonyl-CoA:ACP transacylase (MAT) domain; the sequence is GFVFSGQGAQ…ASLHRKDDGW (306 aa). Ser-998 (for acyl/malonyl transferase activity) is an active-site residue. Positions 1290 to 1605 are product template (PT) domain; sequence TSSVQKIIRQ…RSLLNKVLPP (316 aa). The N-terminal hotdog fold stretch occupies residues 1294–1428; sequence QKIIRQTDGP…CLLRFADPTS (135 aa). Positions 1294–1600 constitute a PKS/mFAS DH domain; the sequence is QKIIRQTDGP…FLGMSRSLLN (307 aa). His-1327 (proton acceptor; for dehydratase activity) is an active-site residue. Positions 1455–1600 are C-terminal hotdog fold; it reads TDSLLSRGIV…FLGMSRSLLN (146 aa). Residue Asp-1514 is the Proton donor; for dehydratase activity of the active site. Residues 1626-1652 are disordered; sequence AASAKDTERRPLDIPTRAQRQPSSAQT. The span at 1643-1652 shows a compositional bias: polar residues; sequence AQRQPSSAQT. The 78-residue stretch at 1649–1726 folds into the Carrier 1 domain; that stretch reads SAQTGTMGRI…ELKAFLGADQ (78 aa). The residue at position 1686 (Ser-1686) is an O-(pantetheine 4'-phosphoryl)serine. The segment at 1733–1762 is disordered; the sequence is ACESSNGQHTPQTSDKGSGTLAVQKTDDDT. A compositionally biased stretch (polar residues) spans 1735-1755; that stretch reads ESSNGQHTPQTSDKGSGTLAV. The Carrier 2 domain maps to 1765 to 1839; that stretch reads DMTLNRVCAI…SLQKALCGSE (75 aa). O-(pantetheine 4'-phosphoryl)serine is present on Ser-1799. The segment at 1840–1859 is disordered; that stretch reads AASNGAPEANETTPSSHRLE. Residues 1875 to 2151 are thioesterase (TE) domain; it reads ASPPHATSIL…MIEMGNLIGE (277 aa). The active-site For thioesterase activity is the Ser-1981.

Functionally, polyketide synthase; part of the Pks2 gene cluster that mediates the formation of infectious structures (appressoria), enabling these fungi to kill insects faster. The product of the Pks2 gene cluster is different from the one of Pks1 and has still not been identified. The polypeptide is Polyketide synthase 2 (Metarhizium robertsii (strain ARSEF 23 / ATCC MYA-3075) (Metarhizium anisopliae (strain ARSEF 23))).